A 370-amino-acid chain; its full sequence is MAESNKEAIDSARSNVFKESESLEGTCAKIGGYDFNNGIDHSKLLKSMVSTGFQASNLGDAMIITNQMLEWRLSHDEVPEHCSEEEKKNRESVKCKIFLGFTSNLISSGVRETICYLAQHRMVDVLVTTTGGIEEDFIKCLASTYKGKFSLPGADLRSKGLNRIGNLIVPNDNYIKFEDWIIPIFDQMLIEQKTQNVLWTPSRMIARLGKEINNETSYLYWAYKNNIPVFCPSITDGSIGDMLYFHSVSNPGPGLVVDIVQDVIAMDNEAVHASPQKTGIIILGGGLPKHHICNANMMRNGADFAVFINTAQEYDGSDSGARPDEAVSWGKISSTGKAVKVHCDATIAFPLLVAETFAVKKEKASKVNGF.

The protein belongs to the deoxyhypusine synthase family. In terms of assembly, homotetramer. NAD(+) is required as a cofactor. The N-terminus is blocked. As to expression, expressed in roots.

The enzyme catalyses putrescine + spermidine = sym-homospermidine + propane-1,3-diamine. Its pathway is alkaloid biosynthesis; pyrrolizidine alkaloid biosynthesis. In terms of biological role, catalyzes the transfer of an aminobutyl unit from spermidine onto putrescine. The resulting polyamine homospermidine is a precursor in the biosynthesis of pyrrolizidine alkaloids. The chain is Homospermidine synthase 2 from Senecio vernalis (Spring groundsel).